The sequence spans 218 residues: tRNA (guanine-N(7)-)-methyltransferase (218 aa).

The S-adenosyl-L-methionine site is built by glutamate 45, glutamate 70, aspartate 97, and aspartate 119. Aspartate 119 is an active-site residue. Substrate is bound at residue lysine 123. Residues 125-130 (RHEKRR) are interaction with RNA. Residues aspartate 155 and 195 to 198 (TEYE) contribute to the substrate site.

This sequence belongs to the class I-like SAM-binding methyltransferase superfamily. TrmB family.

It catalyses the reaction guanosine(46) in tRNA + S-adenosyl-L-methionine = N(7)-methylguanosine(46) in tRNA + S-adenosyl-L-homocysteine. Its pathway is tRNA modification; N(7)-methylguanine-tRNA biosynthesis. Functionally, catalyzes the formation of N(7)-methylguanine at position 46 (m7G46) in tRNA. This chain is tRNA (guanine-N(7)-)-methyltransferase, found in Lactobacillus acidophilus (strain ATCC 700396 / NCK56 / N2 / NCFM).